A 411-amino-acid polypeptide reads, in one-letter code: Secretion apparatus protein BsaZ (411 aa).

The next 4 helical transmembrane spans lie at 28–48, 80–100, 137–157, and 175–195; these read IVALIVIATGALAAPALVDLT, IAAPFVLLCAAAGALPSLVQS, ALLYVGVFALTVRVFADLYHA, and IVLTVRLVLLFLLCALPVLIL. The segment at 341–411 is disordered; the sequence is AANRGGPPPE…APARTGDQNA (71 aa). Low complexity predominate over residues 370-404; the sequence is DACADNAFPDDAPPGAAAPNAGSPDSPAPDGGAPA.

The protein belongs to the type III secretion exporter family.

It is found in the cell membrane. Its function is as follows. Part of the bsa type III secretion system, is involved in the intracellular replication of invading bacteria inside the host cell. Probably necessary for the lysis of the vacuole membrane and escape into the host cell cytoplasm. The sequence is that of Secretion apparatus protein BsaZ (bsaZ) from Burkholderia mallei (strain NCTC 10247).